The chain runs to 353 residues: Protein Wnt-11b (353 aa).

Positions 1–22 (MAPTRHWVTPLLLLCCSGICGA) are cleaved as a signal peptide. N-linked (GlcNAc...) asparagine glycosylation is found at asparagine 31, asparagine 38, and asparagine 88. Intrachain disulfides connect cysteine 78-cysteine 89, cysteine 128-cysteine 136, cysteine 138-cysteine 155, cysteine 208-cysteine 222, and cysteine 210-cysteine 217. Serine 214 carries O-palmitoleoyl serine; by PORCN lipidation. Sulfotyrosine is present on residues tyrosine 274 and tyrosine 281. 6 disulfides stabilise this stretch: cysteine 282/cysteine 313, cysteine 298/cysteine 308, cysteine 312/cysteine 352, cysteine 328/cysteine 343, cysteine 330/cysteine 340, and cysteine 335/cysteine 336. A glycan (N-linked (GlcNAc...) asparagine) is linked at asparagine 299.

Belongs to the Wnt family. In terms of assembly, homodimer. Secreted homodimers form a complex with wnt5a homodimers; tyrosine sulfation of both wnt11 and wnt5a by tpst1 is required for this interaction. Interacts with the transmembrane receptor fzd7/fz7. Interacts with lrp6 and ryk. Interacts with tdgf1/frl1. Interacts weakly with frzb1 and strongly with frzb2/crescent. Interaction with frzb2/crescent antagonizes wnt11 function in the neuroectoderm, but enhances it in mesodermal tissue. Glycosylation is required for protein secretion. In terms of processing, palmitoleoylation is required for efficient binding to frizzled receptors. Depalmitoleoylation leads to Wnt signaling pathway inhibition. As to expression, transcripts are expressed ubiquitously in early oocytes but become vegetally localized during mid-oogenesis then enriched on the dorsal side by the 8 to 16 cell stage. The protein becomes asymmetrically concentrated on the dorsal side by the 64-cell stage. During gastrulation, expressed in the lateral and ventral marginal zone, and during tadpole stages in the somites and first branchial arch. Weakly expressed in the pronephros from at least stage 12.5, with kidney expression increasing until stage 35. Expressed in the prospective posterior gut between stages 13 and 20, and in the deep foregut endoderm. Prior to neural crest cell migration, expressed in a domain flanking the neural crest on the lateral or epidermal side (the opposite side to wnt11/wnt11-r).

It localises to the secreted. The protein localises to the extracellular space. The protein resides in the extracellular matrix. Its function is as follows. Ligand for the frizzled7 transmembrane receptor. Primarily acts via non-canonical Wnt pathways mediated by either Ca(2+) and PKC, or by JNK and dvl2/dsh. Depending on the cellular context, can also signal via the canonical Wnt pathway mediated by beta-catenin and dvl2/dsh. May also inhibit canonical Wnt signaling. Maternally initiates dorsal/ventral axis formation by a canonical route, which signals via lrp6. In a complex with wnt5a, activates the canonical and non-canonical processes involved in axis formation. In the non-canonical pathway, acts through fzd7/fz7 to induce phosphorylation of dvl2/dsh. Signals through a non-canonical Wnt pathway to regulate convergent extension movements during gastrulation. Interactions with the secreted Wnt antagonist sfrp5 to coordinate foregut development, acting via a non-canonical Wnt pathway whereby sfrp5 restricts wnt11b activity to prevent inappropriate foregut formation. Mediates cardiogenesis via non-canonical Wnt signaling involving JNK-activation and PKC. Acts redundantly with wnt11/wnt11r during pronephros induction. The polypeptide is Protein Wnt-11b (wnt11b) (Xenopus laevis (African clawed frog)).